The primary structure comprises 464 residues: MLNKLNLPIHIIGGGLAGSEASWQIAQLGIPVILHEMRPQRLSEAHKTDKLAELVCSNSFRSDDSLTNAVGLLHAEMRLAKSLIMKAADANKVPAGSALAVDRDGFSQTVTESLENHPLITIKREEIHDIPENWHNVIIATGPLTSPALAYAIQAVTGTEALSFFDAIAPIIYTDSINMNICWYQSRYDKIGPGGTGKDYINCPLDKEQYEAFIQALKDGEKIEFREFENVPYFDGCLPIEVMAERGVETLRHGPMKPMGLTNTHTPKVKAYAIVQLRQDNMLGTLYNMVGFQTKLKYSEQVRIFRTIPGLEKAEFARLGGLHRNTYLDSPTILDETLRLKKKPQLRFAGQITGCEGYVESSAIGLLAGRFAAAEYNNTYPSLPPKTTAFGALLNHITSGYIVTQETEKHSFQPMNINFGLFPPIDSTNHQRKTMQYKEKKLAKRQAIVERALNDCTQWLNGLK.

FAD is bound at residue 13–18 (GGGLAG).

This sequence belongs to the MnmG family. TrmFO subfamily. The cofactor is FAD.

The protein resides in the cytoplasm. It catalyses the reaction uridine(54) in tRNA + (6R)-5,10-methylene-5,6,7,8-tetrahydrofolate + NADH + H(+) = 5-methyluridine(54) in tRNA + (6S)-5,6,7,8-tetrahydrofolate + NAD(+). The enzyme catalyses uridine(54) in tRNA + (6R)-5,10-methylene-5,6,7,8-tetrahydrofolate + NADPH + H(+) = 5-methyluridine(54) in tRNA + (6S)-5,6,7,8-tetrahydrofolate + NADP(+). Catalyzes the folate-dependent formation of 5-methyl-uridine at position 54 (M-5-U54) in all tRNAs. The protein is Methylenetetrahydrofolate--tRNA-(uracil-5-)-methyltransferase TrmFO of Bartonella bacilliformis (strain ATCC 35685 / KC583 / Herrer 020/F12,63).